Consider the following 131-residue polypeptide: Histone H2A (131 aa).

The tract at residues 1 to 24 (MSSGGKGKASSETKSSSRSSKAGL) is disordered. Residues Lys-6 and Lys-8 each carry the N6-acetyllysine modification. The segment covering 8-23 (KASSETKSSSRSSKAG) has biased composition (low complexity). At Gln-105 the chain carries N5-methylglutamine. Ser-128 carries the post-translational modification Phosphoserine. The [ST]-Q motif signature appears at 128-129 (SQ).

Belongs to the histone H2A family. The nucleosome is a histone octamer containing two molecules each of H2A, H2B, H3 and H4 assembled in one H3-H4 heterotetramer and two H2A-H2B heterodimers. The octamer wraps approximately 147 bp of DNA. In terms of processing, phosphorylated to form H2AS128ph (gamma-H2A) in response to DNA double-strand breaks (DSBs) generated by exogenous genotoxic agents and by stalled replication forks. Phosphorylation is dependent on the DNA damage checkpoint kinases MEC1/ATR and TEL1/ATM, spreads on either side of a detected DSB site and may mark the surrounding chromatin for recruitment of proteins required for DNA damage signaling and repair. Gamma-H2A is removed from the DNA prior to the strand invasion-primer extension step of the repair process and subsequently dephosphorylated. Dephosphorylation is necessary for efficient recovery from the DNA damage checkpoint. Acetylated by ESA1 to form H2AK4ac and H2AK7ac.

It localises to the nucleus. The protein localises to the chromosome. Its function is as follows. Core component of nucleosome which plays a central role in DNA double strand break (DSB) repair. Nucleosomes wrap and compact DNA into chromatin, limiting DNA accessibility to the cellular machineries which require DNA as a template. Histones thereby play a central role in transcription regulation, DNA repair, DNA replication and chromosomal stability. DNA accessibility is regulated via a complex set of post-translational modifications of histones, also called histone code, and nucleosome remodeling. The polypeptide is Histone H2A (HTA1) (Cryptococcus neoformans var. neoformans serotype D (strain B-3501A) (Filobasidiella neoformans)).